The following is a 114-amino-acid chain: Large ribosomal subunit protein uL22 (114 aa).

Belongs to the universal ribosomal protein uL22 family. In terms of assembly, part of the 50S ribosomal subunit.

This protein binds specifically to 23S rRNA; its binding is stimulated by other ribosomal proteins, e.g. L4, L17, and L20. It is important during the early stages of 50S assembly. It makes multiple contacts with different domains of the 23S rRNA in the assembled 50S subunit and ribosome. Functionally, the globular domain of the protein is located near the polypeptide exit tunnel on the outside of the subunit, while an extended beta-hairpin is found that lines the wall of the exit tunnel in the center of the 70S ribosome. This Streptococcus sanguinis (strain SK36) protein is Large ribosomal subunit protein uL22.